The primary structure comprises 371 residues: RT1 class I histocompatibility antigen, AA alpha chain (371 aa).

Residues 1–24 form the signal peptide; it reads MEAMAPRTLLLLLAAALAPTQTRA. The interval 25-114 is alpha-1; it reads GSHSLRYFYT…LRGYYNQSEG (90 aa). Topologically, residues 25 to 311 are extracellular; that stretch reads GSHSLRYFYT…PSTDSNMETT (287 aa). Residue Asn110 is glycosylated (N-linked (GlcNAc...) asparagine). The alpha-2 stretch occupies residues 115 to 206; that stretch reads GSHTIQEMYG…ELGKETLLRS (92 aa). Positions 207–298 are alpha-3; sequence DPPEAHVTLH…GLPKPLSQRW (92 aa). An Ig-like C1-type domain is found at 209 to 295; it reads PEAHVTLHPR…EHEGLPKPLS (87 aa). Residue Asn280 is glycosylated (N-linked (GlcNAc...) asparagine). The connecting peptide stretch occupies residues 299 to 311; sequence EPSPSTDSNMETT. A helical transmembrane segment spans residues 312–336; the sequence is VIYVILGAVAMIGAVAIIGAMVAVV. Residues 337–371 are Cytoplasmic-facing; sequence RRRKRNTGGKGGDYAPAPGRDSSQSSDVSLPDCKA. The segment at 342-371 is disordered; that stretch reads NTGGKGGDYAPAPGRDSSQSSDVSLPDCKA. Residues Ser362 and Ser365 each carry the phosphoserine modification.

It belongs to the MHC class I family. In terms of assembly, heterodimer of an alpha chain and a beta chain (beta-2-microglobulin).

It localises to the membrane. Its function is as follows. Involved in the presentation of foreign antigens to the immune system. The polypeptide is RT1 class I histocompatibility antigen, AA alpha chain (Rattus norvegicus (Rat)).